The sequence spans 427 residues: 3-phosphoshikimate 1-carboxyvinyltransferase (427 aa).

3 residues coordinate 3-phosphoshikimate: lysine 20, serine 21, and arginine 25. Lysine 20 lines the phosphoenolpyruvate pocket. Phosphoenolpyruvate-binding residues include glycine 92 and arginine 120. Positions 166, 168, 312, and 339 each coordinate 3-phosphoshikimate. Glutamine 168 lines the phosphoenolpyruvate pocket. The active-site Proton acceptor is aspartate 312. 2 residues coordinate phosphoenolpyruvate: arginine 343 and arginine 385.

It belongs to the EPSP synthase family. Monomer.

The protein resides in the cytoplasm. The enzyme catalyses 3-phosphoshikimate + phosphoenolpyruvate = 5-O-(1-carboxyvinyl)-3-phosphoshikimate + phosphate. Its pathway is metabolic intermediate biosynthesis; chorismate biosynthesis; chorismate from D-erythrose 4-phosphate and phosphoenolpyruvate: step 6/7. Catalyzes the transfer of the enolpyruvyl moiety of phosphoenolpyruvate (PEP) to the 5-hydroxyl of shikimate-3-phosphate (S3P) to produce enolpyruvyl shikimate-3-phosphate and inorganic phosphate. In Streptococcus pneumoniae serotype 19F (strain G54), this protein is 3-phosphoshikimate 1-carboxyvinyltransferase.